A 137-amino-acid chain; its full sequence is Large ribosomal subunit protein uL16 (137 aa).

This sequence belongs to the universal ribosomal protein uL16 family. In terms of assembly, part of the 50S ribosomal subunit.

In terms of biological role, binds 23S rRNA and is also seen to make contacts with the A and possibly P site tRNAs. The protein is Large ribosomal subunit protein uL16 of Tolumonas auensis (strain DSM 9187 / NBRC 110442 / TA 4).